The chain runs to 173 residues: Photosystem I assembly protein Ycf3 (173 aa).

TPR repeat units lie at residues 35–68 (AYLYYRKGLAAQNDGDYSEALEYYEESLKLEDNQ), 72–105 (GETLKNMAIIYMSNGDEERALNTYKKALGQNPKQ), and 120–153 (GRMAQRNGNQDECDIWFDQAAEVWSKAVRLYPGG).

Belongs to the Ycf3 family.

Its subcellular location is the cellular thylakoid membrane. Its function is as follows. Essential for the assembly of the photosystem I (PSI) complex. May act as a chaperone-like factor to guide the assembly of the PSI subunits. This chain is Photosystem I assembly protein Ycf3, found in Prochlorococcus marinus (strain NATL1A).